We begin with the raw amino-acid sequence, 263 residues long: Splicing regulator sde2 (263 aa).

Positions 1–84 (MECKTVFLNG…LTLCTRVLGG (84 aa)) are cleaved as a propeptide — UBL. 3 disordered regions span residues 95–118 (AGGRMSKKRNEQENQDSCRDLDGN), 137–158 (PAETRAKKEAKKQKLNKVLAAD), and 194–263 (STSA…LYGL). Basic and acidic residues predominate over residues 102 to 117 (KRNEQENQDSCRDLDG). 2 stretches are compositionally biased toward low complexity: residues 194–209 (STSASSFSSGSNGATT) and 219–230 (NNNSSINSWSRR).

The protein belongs to the SDE2 family. Interacts with cay1/cactin. Interacts with prp19. Interacts with cwf12. Interacts with cdc5. In terms of processing, the N-terminal UBL (ubiquitin-like) propeptide is cleaved at Gly-84 by the deubiquitinating enzymes ubp5 and ubp15; the resulting mature sde2 associates with spliceosomes. Post-translationally, polyubiquitinated; ubiquitination is partially dependent on ubr11.

It is found in the cytoplasm. The protein resides in the nucleus. Plays a role in pre-mRNA splicing by facilitating excision of introns featuring relatively long (&gt;21 nucleotides) spacing between the branchpoint and 3'-splice site (ss). Recruits cactin to the spliceosome which may enable folding of RNA between the branchpoint and 3'-ss, to guide the splice site towards the spliceosome's catalytic center. Required for proper chromatin organization by assisting splicing of components involved in genomic stability and telomere organization. The sequence is that of Splicing regulator sde2 from Schizosaccharomyces pombe (strain 972 / ATCC 24843) (Fission yeast).